The primary structure comprises 127 residues: Large ribosomal subunit protein eL32B (127 aa).

The protein belongs to the eukaryotic ribosomal protein eL32 family. In terms of assembly, component of the large ribosomal subunit (LSU). Mature yeast ribosomes consist of a small (40S) and a large (60S) subunit. The 40S small subunit contains 1 molecule of ribosomal RNA (18S rRNA) and at least 33 different proteins. The large 60S subunit contains 3 rRNA molecules (25S, 5.8S and 5S rRNA) and at least 46 different proteins.

It localises to the cytoplasm. Its subcellular location is the nucleus. The protein resides in the nucleolus. In terms of biological role, component of the ribosome, a large ribonucleoprotein complex responsible for the synthesis of proteins in the cell. The small ribosomal subunit (SSU) binds messenger RNAs (mRNAs) and translates the encoded message by selecting cognate aminoacyl-transfer RNA (tRNA) molecules. The large subunit (LSU) contains the ribosomal catalytic site termed the peptidyl transferase center (PTC), which catalyzes the formation of peptide bonds, thereby polymerizing the amino acids delivered by tRNAs into a polypeptide chain. The nascent polypeptides leave the ribosome through a tunnel in the LSU and interact with protein factors that function in enzymatic processing, targeting, and the membrane insertion of nascent chains at the exit of the ribosomal tunnel. In Schizosaccharomyces pombe (strain 972 / ATCC 24843) (Fission yeast), this protein is Large ribosomal subunit protein eL32B (rpl3201).